Reading from the N-terminus, the 38-residue chain is Alpha-conotoxin PeIA (38 aa).

A propeptide spanning residues 1 to 21 (FDGRNAAANDKASDLVALTVR) is cleaved from the precursor. 2 disulfide bridges follow: C23–C29 and C24–C37. Residues 25–27 (SHP) form a ser-Xaa-Pro motif, crucial for potent interaction with nAChR region. C37 is modified (cysteine amide).

The protein belongs to the conotoxin A superfamily. Post-translationally, the hydroxylation at position Pro-27 is critical, since an hydroxylation at this position decreases potency of the toxin to inhibit both alpha-3-beta-2 (1300-fold) and alpha-6/alpha-3-beta-2-beta-3 (130-fold) nAChRs. A non-modified residue at position Pro-34 is critical, since a hydroxylation at this position decreases potency of the toxin to inhibit alpha-3-beta-2 (1-45-fold) and increases potency to inhibit alpha-6/alpha-3-beta-2-beta-3 (1.77-fold) nAChRs. As to expression, expressed by the venom duct.

Its subcellular location is the secreted. Functionally, alpha-conotoxins act on postsynaptic membranes, they bind to the nicotinic acetylcholine receptors (nAChR) and thus inhibit them. This synthetic peptide potently and reversibly blocks alpha-9-alpha-10/CHRNA9-CHRNA10 nAChR (IC(50)=6.9-54.9 nM), alpha-3-beta-2/CHRNA3-CHRNB2 (IC(50)=9.7-97.5 nM) and alpha-6/alpha-3-beta-2-beta-3 (CHRNA6/CHRNA3-CHRNB2-CHRNB3) (IC(50)=11.1-17.2 nM). It also inhibits alpha-6/alpha-3-beta-4 (CHRNA6/CHRNA3-CHRNB4) nAChR with a higher potency on human (IC(50)=6.75 nM) than on rat receptors (IC(50)=130-147 nM). Also shows a weak ability to inhibit alpha-3-beta-4/CHRNA3-CHRNB4 (IC(50)=480-1500 nM). This synthetic toxin also inhibits N-type calcium channels (Ca2.2/CACNA1B) (IC(50)=1.1 nM) via the activation of the G protein-coupled GABA(B) receptor in DRG neurons. Also exhibits inhibition of D.melanogaster alpha-7/CHRNA7 nAChRs. The chain is Alpha-conotoxin PeIA from Conus pergrandis (Grand cone).